Consider the following 365-residue polypeptide: IgG receptor FcRn large subunit p51 (365 aa).

Positions 1–21 (MGMPLPWALSLLLVLLPQTWG) are cleaved as a signal peptide. The interval 22–110 (SETRPPLMYH…KTLEKILNGT (89 aa)) is alpha-1. Topologically, residues 22-297 (SETRPPLMYH…VDLDSSARSS (276 aa)) are extracellular. Asparagine 108, asparagine 125, asparagine 149, and asparagine 246 each carry an N-linked (GlcNAc...) asparagine glycan. The segment at 111 to 200 (YTLQGLLGCE…ERGRRNLEWK (90 aa)) is alpha-2. 2 disulfides stabilise this stretch: cysteine 119/cysteine 182 and cysteine 221/cysteine 275. The alpha-3 stretch occupies residues 201 to 290 (EPPSMRLKAR…GLAQPLTVDL (90 aa)). In terms of domain architecture, Ig-like C1-type spans 202–289 (PPSMRLKARP…EGLAQPLTVD (88 aa)). Residues 291–297 (DSSARSS) form a connecting peptide region. Residues 298-321 (VPVVGIVLGLLLVVVAIAGGVLLW) traverse the membrane as a helical segment. The Cytoplasmic portion of the chain corresponds to 322 to 365 (GRMRSGLPAPWLSLSGDDSGDLLPGGNLPPEAEPQGANAFPATS). A Phosphoserine modification is found at serine 334. The segment at 343–365 (LLPGGNLPPEAEPQGANAFPATS) is disordered.

The protein belongs to the immunoglobulin superfamily. In terms of assembly, fcRn complex consists of two subunits: p51, and p14 which is equivalent to beta-2-microglobulin. It forms an MHC class I-like heterodimer. Interacts with albumin/ALB; this interaction regulates ALB homeostasis. Intestinal epithelium of suckling rodents. Expressed in neonatal intestine and fetal yolk sac.

It is found in the cell membrane. The protein localises to the endosome membrane. Its function is as follows. Cell surface receptor that transfers passive humoral immunity from the mother to the newborn. Binds to the Fc region of monomeric immunoglobulin gamma and mediates its selective uptake from milk. IgG in the milk is bound at the apical surface of the intestinal epithelium. The resultant FcRn-IgG complexes are transcytosed across the intestinal epithelium and IgG is released from FcRn into blood or tissue fluids. Throughout life, contributes to effective humoral immunity by recycling IgG and extending its half-life in the circulation. Mechanistically, monomeric IgG binding to FcRn in acidic endosomes of endothelial and hematopoietic cells recycles IgG to the cell surface where it is released into the circulation. In addition of IgG, regulates homeostasis of the other most abundant circulating protein albumin/ALB. The chain is IgG receptor FcRn large subunit p51 (Fcgrt) from Mus musculus (Mouse).